The chain runs to 1049 residues: Solvent-resistant pump membrane transporter SrpB (1049 aa).

Helical transmembrane passes span 10–30, 339–359, 366–386, 392–412, 440–460, 470–490, 542–562, 871–891, 895–915, 927–947, 973–993, and 1008–1028; these read IFAW…LAKM, SVVH…YLFL, LIPT…LPYF, VLTM…AIVV, GALV…AFFG, FAIT…VFTP, LAFL…PKAF, APLL…ALYE, VPVS…LATL, VGLM…VEFA, ILMT…ASGA, and GMIT…VVVV.

It belongs to the resistance-nodulation-cell division (RND) (TC 2.A.6) family.

The protein localises to the cell inner membrane. The inner membrane transporter component of an organic solvent efflux pump. Involved in export of a number of low log POW compounds including hexane (log POW 3.5), toluene (log POW 2.5) and dimethylphthalate (log POW 2.3). The solvent resistance phenotype has been postulated to depend on the operon expression level. This is Solvent-resistant pump membrane transporter SrpB (srpB) from Pseudomonas putida (Arthrobacter siderocapsulatus).